We begin with the raw amino-acid sequence, 397 residues long: Succinate--CoA ligase [ADP-forming] subunit beta (397 aa).

Residues 9 to 254 (KALLKSFGAP…ETEQDAKELE (246 aa)) enclose the ATP-grasp domain. ATP-binding positions include K46, 53-55 (GRG), E109, A112, and E117. Mg(2+)-binding residues include N209 and D223. Substrate-binding positions include N274 and 331-333 (GIM).

This sequence belongs to the succinate/malate CoA ligase beta subunit family. As to quaternary structure, heterotetramer of two alpha and two beta subunits. Requires Mg(2+) as cofactor.

The catalysed reaction is succinate + ATP + CoA = succinyl-CoA + ADP + phosphate. It carries out the reaction GTP + succinate + CoA = succinyl-CoA + GDP + phosphate. It participates in carbohydrate metabolism; tricarboxylic acid cycle; succinate from succinyl-CoA (ligase route): step 1/1. Succinyl-CoA synthetase functions in the citric acid cycle (TCA), coupling the hydrolysis of succinyl-CoA to the synthesis of either ATP or GTP and thus represents the only step of substrate-level phosphorylation in the TCA. The beta subunit provides nucleotide specificity of the enzyme and binds the substrate succinate, while the binding sites for coenzyme A and phosphate are found in the alpha subunit. This Hyphomonas neptunium (strain ATCC 15444) protein is Succinate--CoA ligase [ADP-forming] subunit beta.